The following is a 68-amino-acid chain: Cell division protein ZapB (68 aa).

A coiled-coil region spans residues leucine 3–leucine 58.

It belongs to the ZapB family. Homodimer. The ends of the coiled-coil dimer bind to each other, forming polymers. Interacts with FtsZ.

The protein localises to the cytoplasm. Non-essential, abundant cell division factor that is required for proper Z-ring formation. It is recruited early to the divisome by direct interaction with FtsZ, stimulating Z-ring assembly and thereby promoting cell division earlier in the cell cycle. Its recruitment to the Z-ring requires functional FtsA or ZipA. The polypeptide is Cell division protein ZapB (Shewanella loihica (strain ATCC BAA-1088 / PV-4)).